The chain runs to 436 residues: 3-ketoacyl-CoA thiolase (436 aa).

Cysteine 99 (acyl-thioester intermediate) is an active-site residue. Active-site proton acceptor residues include histidine 392 and cysteine 422.

It belongs to the thiolase-like superfamily. Thiolase family. As to quaternary structure, heterotetramer of two alpha chains (FadJ) and two beta chains (FadI).

It localises to the cytoplasm. It catalyses the reaction an acyl-CoA + acetyl-CoA = a 3-oxoacyl-CoA + CoA. The protein operates within lipid metabolism; fatty acid beta-oxidation. Catalyzes the final step of fatty acid oxidation in which acetyl-CoA is released and the CoA ester of a fatty acid two carbons shorter is formed. This Salmonella dublin (strain CT_02021853) protein is 3-ketoacyl-CoA thiolase.